The primary structure comprises 127 residues: uncharacterized protein (127 aa).

The N-terminal stretch at 1 to 16 is a signal peptide; that stretch reads MIKKIIFGIAILLSLS. Residue Cys17 is the site of N-palmitoyl cysteine attachment. A lipid anchor (S-diacylglycerol cysteine) is attached at Cys17. Positions 56–101 form a coiled coil; sequence EVRKEIQEYRVEIVDINKKKRELYNSLSKEAQNFLAEQQKYKQKLS. The tract at residues 101-127 is disordered; sequence SISKLPTEDDSPNNTANSKDNKDTDTK.

The protein resides in the cell membrane. This is an uncharacterized protein from Rickettsia felis (strain ATCC VR-1525 / URRWXCal2) (Rickettsia azadi).